Consider the following 288-residue polypeptide: Bifunctional protein FolD (288 aa).

NADP(+) is bound by residues 166 to 168 (GAS) and Ile232.

The protein belongs to the tetrahydrofolate dehydrogenase/cyclohydrolase family. Homodimer.

It catalyses the reaction (6R)-5,10-methylene-5,6,7,8-tetrahydrofolate + NADP(+) = (6R)-5,10-methenyltetrahydrofolate + NADPH. It carries out the reaction (6R)-5,10-methenyltetrahydrofolate + H2O = (6R)-10-formyltetrahydrofolate + H(+). It functions in the pathway one-carbon metabolism; tetrahydrofolate interconversion. Its function is as follows. Catalyzes the oxidation of 5,10-methylenetetrahydrofolate to 5,10-methenyltetrahydrofolate and then the hydrolysis of 5,10-methenyltetrahydrofolate to 10-formyltetrahydrofolate. The sequence is that of Bifunctional protein FolD from Acidithiobacillus ferrooxidans (strain ATCC 23270 / DSM 14882 / CIP 104768 / NCIMB 8455) (Ferrobacillus ferrooxidans (strain ATCC 23270)).